The primary structure comprises 181 residues: Adenine phosphoribosyltransferase (181 aa).

The protein belongs to the purine/pyrimidine phosphoribosyltransferase family. In terms of assembly, homodimer.

The protein localises to the cytoplasm. It catalyses the reaction AMP + diphosphate = 5-phospho-alpha-D-ribose 1-diphosphate + adenine. Its pathway is purine metabolism; AMP biosynthesis via salvage pathway; AMP from adenine: step 1/1. Functionally, catalyzes a salvage reaction resulting in the formation of AMP, that is energically less costly than de novo synthesis. The protein is Adenine phosphoribosyltransferase of Rhodopseudomonas palustris (strain BisB5).